The primary structure comprises 1479 residues: C-type mannose receptor 2 (1479 aa).

The N-terminal stretch at 1-30 (MVPIRPALAPWPRHLLRCVLLLGGLRLGHP) is a signal peptide. The Extracellular segment spans residues 31-1413 (ADSAAALLEP…SAALPESPVA (1383 aa)). Residues 37–190 (LLEPDVFLIF…SHGKPCTIPF (154 aa)) enclose the Ricin B-type lectin domain. A disulfide bridge links C92 with C111. N-linked (GlcNAc...) asparagine glycans are attached at residues N101 and N139. In terms of domain architecture, Fibronectin type-II spans 181–229 (SHGKPCTIPFKYDNQWFHGCTSTGREDGHLWCATTQDYGKDERWGFCPI). Disulfide bonds link C186/C212, C200/C227, C265/C358, and C334/C350. The C-type lectin 1 domain occupies 243 to 359 (LTDSCYQFNF…CSIALPYVCK (117 aa)). An N-linked (GlcNAc...) asparagine glycan is attached at N363. C-type lectin domains lie at 388 to 504 (FQGH…SICK), 527 to 643 (HSPS…RYIC), 677 to 808 (KLRH…WICK), 831 to 950 (FQEA…YICK), 978 to 1106 (FLNK…GFIC), 1131 to 1242 (YLNH…GAVC), and 1271 to 1391 (FREH…GVVC). 7 cysteine pairs are disulfide-bonded: C409/C503, C480/C495, C617/C634, C703/C807, C784/C799, C852/C949, and C926/C941. Residue N1028 is glycosylated (N-linked (GlcNAc...) asparagine). The cysteines at positions 1077 and 1097 are disulfide-linked. K1141 is covalently cross-linked (Glycyl lysine isopeptide (Lys-Gly) (interchain with G-Cter in SUMO1)). C1219 and C1233 are joined by a disulfide. N1348 carries an N-linked (GlcNAc...) asparagine glycan. An intrachain disulfide couples C1367 to C1382. Residues 1414–1434 (LVVVLTAVLLLLALMTAALIL) form a helical membrane-spanning segment. The Cytoplasmic portion of the chain corresponds to 1435-1479 (YRRRQSAERGSFEGARYSRSSHSGPAEATEKNILVSDMEMNEQQE). Positions 1446–1479 (FEGARYSRSSHSGPAEATEKNILVSDMEMNEQQE) are disordered.

Interacts directly with PLAUR/UPAR and PLAU/pro-UPA to form a tri-molecular complex. Interacts with collagen V and with C-terminal region of type I collagen/COL1A1. Phosphorylated. As to expression, highly expressed in heart, lung and kidney, but little or no expression in brain, thymus or adult liver. Expressed at highly endothelialized sites such as those in choroid plexus and kidney glomerulai as well as in chondrocytes in cartilaginous regions of the embryo.

It is found in the membrane. Functionally, may play a role as endocytotic lectin receptor displaying calcium-dependent lectin activity. Internalizes glycosylated ligands from the extracellular space for release in an endosomal compartment via clathrin-mediated endocytosis. May be involved in plasminogen activation system controlling the extracellular level of PLAUR/PLAU, and thus may regulate protease activity at the cell surface. May contribute to cellular uptake, remodeling and degradation of extracellular collagen matrices. May participate in remodeling of extracellular matrix cooperating with the matrix metalloproteinases (MMPs). This Mus musculus (Mouse) protein is C-type mannose receptor 2 (Mrc2).